Here is a 44-residue protein sequence, read N- to C-terminus: U17-ctenitoxin-Co1a (44 aa).

Intrachain disulfides connect C3–C20, C10–C26, C19–C40, and C28–C38.

As to expression, expressed by the venom gland.

It localises to the secreted. Its function is as follows. Omega-agatoxins are antagonists of voltage-sensitive calcium channels (Cav). Toxic to mice by intracerebroventricular injection. The sequence is that of U17-ctenitoxin-Co1a from Ctenus ornatus (Brazilian spider).